Reading from the N-terminus, the 523-residue chain is Endoglucanase 19 (523 aa).

The N-terminal stretch at 1–52 (MCSWSLSSHTLTSPVRQAAMEPKSSSCGGAGIRLRLLVVLHLLLLVPSSAMA) is a signal peptide. Aspartate 107 (nucleophile) is an active-site residue. Residue asparagine 279 is glycosylated (N-linked (GlcNAc...) asparagine). Residues histidine 442, aspartate 493, and glutamate 502 contribute to the active site.

This sequence belongs to the glycosyl hydrolase 9 (cellulase E) family.

The protein resides in the secreted. It catalyses the reaction Endohydrolysis of (1-&gt;4)-beta-D-glucosidic linkages in cellulose, lichenin and cereal beta-D-glucans.. This is Endoglucanase 19 from Oryza sativa subsp. japonica (Rice).